We begin with the raw amino-acid sequence, 710 residues long: Elongation factor G (710 aa).

Positions 8–297 constitute a tr-type G domain; the sequence is ERVRNIGIAA…AVVDYLPSPI (290 aa). GTP-binding positions include 17–24, 96–100, and 150–153; these read AHIDAGKT, DTPGH, and NKMD.

The protein belongs to the TRAFAC class translation factor GTPase superfamily. Classic translation factor GTPase family. EF-G/EF-2 subfamily.

Its subcellular location is the cytoplasm. Catalyzes the GTP-dependent ribosomal translocation step during translation elongation. During this step, the ribosome changes from the pre-translocational (PRE) to the post-translocational (POST) state as the newly formed A-site-bound peptidyl-tRNA and P-site-bound deacylated tRNA move to the P and E sites, respectively. Catalyzes the coordinated movement of the two tRNA molecules, the mRNA and conformational changes in the ribosome. In Synechococcus sp. (strain JA-3-3Ab) (Cyanobacteria bacterium Yellowstone A-Prime), this protein is Elongation factor G.